A 530-amino-acid chain; its full sequence is Estrogen receptor beta (530 aa).

Residues 1 to 148 (MDIKNSPSSL…GPSSKRDAHF (148 aa)) are modulating. Position 61 is a phosphoserine; alternate (Ser61). O-linked (GlcNAc) serine; alternate glycosylation is present at Ser61. Phosphoserine; by MAPK is present on residues Ser87 and Ser105. 2 NR C4-type zinc fingers span residues 149–169 (CAVC…CEGC) and 185–209 (CPAT…LRKC). Positions 149–214 (CAVCSDYASG…RLRKCYEVGM (66 aa)) form a DNA-binding region, nuclear receptor. In terms of domain architecture, NR LBD spans 264–498 (SPEQLVLTLL…DLLLEMMNAH (235 aa)). The disordered stretch occupies residues 507 to 530 (ITGSECSPAEDSKSTEGSQNPQSP). The span at 521-530 (TEGSQNPQSP) shows a compositional bias: polar residues.

The protein belongs to the nuclear hormone receptor family. NR3 subfamily. Binds DNA as a homodimer. Can form a heterodimer with ESR1. Interacts with NCOA1, NCOA3, NCOA5 and NCOA6 coactivators, leading to a strong increase of transcription of target genes. Interacts with UBE1C and AKAP13. Interacts with DNTTIP2. Interacts with CCDC62 in the presence of estradiol/E2; this interaction seems to enhance the transcription of target genes. Interacts with DNAAF4. Interacts with PRMT2. Interacts with CCAR2 (via N-terminus) in a ligand-independent manner. Interacts with RBM39, in the presence of estradiol (E2). Interacts with STUB1/CHIP. In terms of processing, phosphorylation at Ser-87 and Ser-105 recruits NCOA1.

Its subcellular location is the nucleus. In terms of biological role, nuclear hormone receptor. Binds estrogens with an affinity similar to that of ESR1/ER-alpha, and activates expression of reporter genes containing estrogen response elements (ERE) in an estrogen-dependent manner. The polypeptide is Estrogen receptor beta (ESR2) (Callithrix jacchus (White-tufted-ear marmoset)).